We begin with the raw amino-acid sequence, 216 residues long: CASP-like protein 2U1 (216 aa).

Residues 1–30 (MKQDTEMGEATNGYIGTPGTVPVSHAGNDS) form a disordered region. At 1-37 (MKQDTEMGEATNGYIGTPGTVPVSHAGNDSGMRRMRT) the chain is on the cytoplasmic side. Residues 38–58 (ASILMRLTAMALCVTALVTMV) traverse the membrane as a helical segment. Topologically, residues 59 to 86 (TDKQTHYFNFASTTIVKTAEYTNVLALK) are extracellular. Residues 87 to 107 (VFVYTNGVIAGYSLLQALWTI) traverse the membrane as a helical segment. Residues 108–128 (VAKSSYSTSKARLWTTFFLDQ) lie on the Cytoplasmic side of the membrane. A helical transmembrane segment spans residues 129–148 (FIVYVLIGVTGAATEVAYIA). Topologically, residues 149-170 (EKGESDVAWPKQCNNFGRFCSQ) are extracellular. A helical membrane pass occupies residues 171 to 191 (VGASVIVCFVAILTLVFLAVL). Over 192-216 (SAKQLFIHERPSRTTRKDGYYTSNQ) the chain is Cytoplasmic.

The protein belongs to the Casparian strip membrane proteins (CASP) family. Homodimer and heterodimers.

It is found in the cell membrane. This Marchantia polymorpha (Common liverwort) protein is CASP-like protein 2U1.